The chain runs to 521 residues: Interleukin-9 receptor (521 aa).

A signal peptide spans 1–40 (MGLGRCIWEGWTLESEALRRDMGTWLLACICICTCVCLGV). Over 41 to 270 (SVTGEGQGPR…GPLIPPWGWP (230 aa)) the chain is Extracellular. N-linked (GlcNAc...) asparagine glycosylation is found at Asn117 and Asn156. The Fibronectin type-III domain maps to 149-259 (PPSDLQSNIS…QPVCFQAPQR (111 aa)). The short motif at 245 to 249 (WSEWS) is the WSXWS motif element. The chain crosses the membrane as a helical span at residues 271 to 291 (GNTLVAVSIFLLLTGPTYLLF). Residues 292 to 521 (KLSPRVKRIF…VLSKARSWTF (230 aa)) lie on the Cytoplasmic side of the membrane. Residues 301–309 (FYQNVPSPA) carry the Box 1 motif motif. The tract at residues 413–439 (WAPTSLTRPAPPDSEGSRSSSSSSSSN) is disordered. Positions 429–439 (SRSSSSSSSSN) are enriched in low complexity.

Belongs to the type I cytokine receptor family. Type 4 subfamily. Interacts with IL9.

The protein localises to the cell membrane. It localises to the secreted. Plays an important role in the immune response against parasites by acting as a receptor of IL9. The polypeptide is Interleukin-9 receptor (IL9R) (Homo sapiens (Human)).